The chain runs to 424 residues: Formyl-CoA:oxalate CoA-transferase (424 aa).

CoA-binding positions include 17-18, Arg-38, 96-98, Arg-104, and 136-139; these read QS, NFA, and KVYE. Asp-168 serves as the catalytic Nucleophile. Position 247–249 (247–249) interacts with substrate; that stretch reads GGQ.

The protein belongs to the CoA-transferase III family. Frc subfamily. As to quaternary structure, homodimer.

The catalysed reaction is formyl-CoA + oxalate = oxalyl-CoA + formate. The protein operates within metabolic intermediate degradation; oxalate degradation; CO(2) and formate from oxalate: step 1/2. Involved in the catabolism of oxalate and in the adapatation to low pH via the induction of the oxalate-dependent acid tolerance response (ATR). Catalyzes the transfer of the CoA moiety from formyl-CoA to oxalate. This Afipia carboxidovorans (strain ATCC 49405 / DSM 1227 / KCTC 32145 / OM5) (Oligotropha carboxidovorans) protein is Formyl-CoA:oxalate CoA-transferase.